The following is a 671-amino-acid chain: Annexin A6 (671 aa).

8 Annexin repeats span residues F18–R89, P90–Q161, D173–K245, S249–E320, F361–L432, T433–L504, E519–R594, and N598–G669.

This sequence belongs to the annexin family.

It localises to the cytoplasm. The protein resides in the melanosome. Functionally, may associate with CD21. May regulate the release of Ca(2+) from intracellular stores. In Gallus gallus (Chicken), this protein is Annexin A6 (ANXA6).